A 58-amino-acid chain; its full sequence is uncharacterized protein (58 aa).

This sequence to A.fulgidus AF2407.1.

This is an uncharacterized protein from Pyrococcus abyssi (strain GE5 / Orsay).